The following is a 56-amino-acid chain: PI-actitoxin-Afv2a (56 aa).

Residues 5-55 (CLLPMKVGFCRAHVPRFYYNSSSGKCEGFTYGGCGANANNFQTKAQCEKAC) enclose the BPTI/Kunitz inhibitor domain. 3 disulfides stabilise this stretch: C5–C55, C14–C38, and C30–C51.

This sequence belongs to the venom Kunitz-type family. Sea anemone type 2 potassium channel toxin subfamily. As to expression, expressed by acrorhagi.

Its subcellular location is the secreted. The protein localises to the nematocyst. In terms of biological role, serine protease inhibitor that is strongly active against trypsin (950 IU/mg) and moderately active against plasmin. The protein is PI-actitoxin-Afv2a of Anthopleura fuscoviridis (Sea anemone).